Reading from the N-terminus, the 31-residue chain is Cytolysin Oshem 2 (31 aa).

It localises to the secreted. Its subcellular location is the nematocyst. The protein localises to the target cell membrane. Cytolysin that shows weak hemolysis and weak myonecrosis. This chain is Cytolysin Oshem 2, found in Olindias sambaquiensis (Hydromedusa).